We begin with the raw amino-acid sequence, 650 residues long: Acetyl-coenzyme A synthetase (650 aa).

CoA-binding positions include 191-194 (RGGR), threonine 311, and asparagine 335. ATP contacts are provided by residues 387-389 (GEP), 411-416 (DTWWQT), aspartate 501, and arginine 516. Serine 524 lines the CoA pocket. Arginine 527 is an ATP binding site. Positions 538, 540, and 543 each coordinate Mg(2+). Position 585 (arginine 585) interacts with CoA. Residue lysine 610 is modified to N6-acetyllysine.

The protein belongs to the ATP-dependent AMP-binding enzyme family. Requires Mg(2+) as cofactor. In terms of processing, acetylated. Deacetylation by the SIR2-homolog deacetylase activates the enzyme.

It carries out the reaction acetate + ATP + CoA = acetyl-CoA + AMP + diphosphate. In terms of biological role, catalyzes the conversion of acetate into acetyl-CoA (AcCoA), an essential intermediate at the junction of anabolic and catabolic pathways. AcsA undergoes a two-step reaction. In the first half reaction, AcsA combines acetate with ATP to form acetyl-adenylate (AcAMP) intermediate. In the second half reaction, it can then transfer the acetyl group from AcAMP to the sulfhydryl group of CoA, forming the product AcCoA. This Vibrio parahaemolyticus serotype O3:K6 (strain RIMD 2210633) protein is Acetyl-coenzyme A synthetase.